A 284-amino-acid chain; its full sequence is 3-methyl-2-oxobutanoate hydroxymethyltransferase 2 (284 aa).

Residues aspartate 49 and aspartate 88 each coordinate Mg(2+). 3-methyl-2-oxobutanoate contacts are provided by residues 49–50 (DS), aspartate 88, and lysine 118. Glutamate 120 contributes to the Mg(2+) binding site. The active-site Proton acceptor is the glutamate 187.

This sequence belongs to the PanB family. In terms of assembly, homodecamer; pentamer of dimers. Mg(2+) is required as a cofactor.

It localises to the cytoplasm. It catalyses the reaction 3-methyl-2-oxobutanoate + (6R)-5,10-methylene-5,6,7,8-tetrahydrofolate + H2O = 2-dehydropantoate + (6S)-5,6,7,8-tetrahydrofolate. It participates in cofactor biosynthesis; (R)-pantothenate biosynthesis; (R)-pantoate from 3-methyl-2-oxobutanoate: step 1/2. In terms of biological role, catalyzes the reversible reaction in which hydroxymethyl group from 5,10-methylenetetrahydrofolate is transferred onto alpha-ketoisovalerate to form ketopantoate. The polypeptide is 3-methyl-2-oxobutanoate hydroxymethyltransferase 2 (Burkholderia cenocepacia (strain HI2424)).